The chain runs to 293 residues: NAD-dependent protein deacetylase (293 aa).

One can recognise a Deacetylase sirtuin-type domain in the interval 1–284 (MTVAITQTGP…QPPDPLHTAT (284 aa)). NAD(+)-binding positions include 27–47 (GAGC…GGWK) and 105–108 (QNVD). His123 (proton acceptor) is an active-site residue. Zn(2+)-binding residues include Cys131, Cys134, Cys182, and Cys185. NAD(+) contacts are provided by residues 222–224 (GSS), 248–250 (NFG), and Cys266.

Belongs to the sirtuin family. Class II subfamily. It depends on Zn(2+) as a cofactor.

It is found in the cytoplasm. It catalyses the reaction N(6)-acetyl-L-lysyl-[protein] + NAD(+) + H2O = 2''-O-acetyl-ADP-D-ribose + nicotinamide + L-lysyl-[protein]. In terms of biological role, NAD-dependent protein deacetylase which modulates the activities of several enzymes which are inactive in their acetylated form. The chain is NAD-dependent protein deacetylase from Xanthomonas campestris pv. campestris (strain 8004).